The sequence spans 458 residues: MYQGPPQPPPQAVPMPYIVNNNTPPYPNGNINFPPTAQQNIPPTVYPQQVPFPGQPQGGQFPQPSSEQQVFNQLPQVTQTFHNSAQNTNATGGPGSGSMPMFTPVASFPHPMATAATAAAPLPRSASQASLSMLRVPYHVRKYLSNLAMLKLYEIINEVNTAMGKIGLLSFWTELISDIFTPDAVIRYSKKSMTDYREFEFIIPVFPVICSTLGRFGIVRMEVKVLQLKTQVLSNSTIFFNCPRVTFVYYYPDGSYITHFSQMKGAFDLDLKINWLDVSMHSFVPDIEWNAVERLLSDDTKSTEIEQIFRKLKQEDVKEQGNSFAENNATNVPPNFEAITQLRSYFDVFRNVSVFGTQEGLMRVMQISTVMSTLKNLRKFQIEKNIDSPVTALSAYIDADKKDSGSEPLHAKRRRNSGISPRTTTLGPNGNSNTSNEELPTSDVNDINKDMTKKKMKF.

The disordered stretch occupies residues 401 to 458; that stretch reads KKDSGSEPLHAKRRRNSGISPRTTTLGPNGNSNTSNEELPTSDVNDINKDMTKKKMKF. A compositionally biased stretch (polar residues) spans 417 to 445; sequence SGISPRTTTLGPNGNSNTSNEELPTSDVN. Residues 446–458 show a composition bias toward basic and acidic residues; it reads DINKDMTKKKMKF.

This sequence belongs to the MFG1 family. In terms of assembly, interacts with FLO8 and MSS11, both morphogenetic transcription factors binding directly to the FLO11 promoter.

The protein resides in the nucleus. Transcriptional regulator with a general role in all morphogenetically distinct forms of filamentous growth, namely haploid invasive growth, biofilm formation, and diploid pseudohyphal growth. May control FLO11 gene expression as part of a promoter-bound complex with FLO8 and MSS1. This Saccharomyces cerevisiae (strain ATCC 204508 / S288c) (Baker's yeast) protein is Morphogenetic regulator of filamentous growth protein 1 (MFG1).